The following is a 156-amino-acid chain: Photosystem I reaction center subunit XI (156 aa).

2 helical membrane passes run 75–95 (GGLL…SLYA) and 128–148 (FFIG…ALYF).

It belongs to the PsaL family.

It localises to the cellular thylakoid membrane. In Crocosphaera subtropica (strain ATCC 51142 / BH68) (Cyanothece sp. (strain ATCC 51142)), this protein is Photosystem I reaction center subunit XI.